The chain runs to 194 residues: MALPSSFLVALVALGCNSVCSLGCDLPQTHGLLNRRALTLLGQMRRLPASSCQKDRNDFAFPQDVFGGDQSHKAQALSVVHVTNQKIFHFFCTEASSSAAWNTTLLEEFCTGLDRQLTRLEACVLQEVEEGEAPLTNEDIHPEDSILRNYFQRLSLYLQEKKYSPCAWEIVRAEIMRSLYYSSTALQKRLRSEK.

An N-terminal signal peptide occupies residues 1-23 (MALPSSFLVALVALGCNSVCSLG). Cystine bridges form between Cys-24/Cys-123 and Cys-52/Cys-166. An N-linked (GlcNAc...) asparagine glycan is attached at Asn-102.

This sequence belongs to the alpha/beta interferon family.

The protein resides in the secreted. Functionally, produced by macrophages, IFN-alpha have antiviral activities. Interferon stimulates the production of two enzymes: a protein kinase and an oligoadenylate synthetase. The protein is Interferon alpha of Felis catus (Cat).